The primary structure comprises 1050 residues: MNTNRRSRSPDEEALEEDQHQYGAGTLSLEELDEHFPNRPRNHSKTFPFSDLFRTLFNPLIDCKPSTSGGTVRGPKPGRGGHFSKVSYHEQRRHIIERFMSRWRSEVGNDFYPAMRLILPDKDRDRGVYGLKENTIGKLLVKVMKIDRNSEDGYNLMHWKLPGGQSGVSRSVGDFAGRCLEVVSKRAMRAQPGDLTIADVNVLLDRLAAASGEAEQLPIFEEFYRQMNAEEMMWLVRIILKDMRVGATERTFLNLWHPDAEALFSVSSSLRRVCWELFDPEFRLEQQETGIKLMQCFQPQLAQFQMTTTWEKLVKNLGVTEENPEFWIEEKLDGERMQMHMIEDDTVPGGFRFAFWSRKAKDYTYLYGESLGDEQSALTRHLHKAFDDGVRNLILDGEMITWDIDIDKMVPFGTLKTAALEQQKNPSKAGPRPLYRVFDILLLNDKPLTEYTLNDRRRALERAVVGVHRRLEILPFERATSPDAIEPLLRRVVAEASEGLVLKNPRSRYSLNSRNNDWIKVKPEYMSDFGESLDCVVVGGYFGSGRRGGTLSSFLCGVRVSQNFIKSGNASAEKCLSFVKVGGGFKAEDYAEIRHHTEGKWQDWDPSSPPTEYIELGGGEKLQYEKPDVWIRPSDSVVISVKAASITQSDQFAMGWTLRFPRFRKLRLDRAWDSALDMDEFEVLRSKIKDQEQERKKMEMENRKRKPATKRARKDLVIAGMSDPSSSSAATPVIAPKETREASKRLFEGLDFCVLSDSLKPNKMTKPALEKLIKDHGGRIHQQVMDHSGQGKIIIPIADKNVIKVASLRKANPEMDIIRPKWIFDCLVQPMPFTKQKENKKGYLLPFEPTHLFHSGSEETSEEAEQAVDKFGDSYAGDLADINELKAIMEGMESDDYVSDSDWDSDSGRGRGGGDGFDMNHFLDHLEEQGTSLDDLRSFMFRRCRVFFALPSAGNGDGAAESKALRLKNYIRFGNGKVVDELETATHVVVVTAPLGESSKKEEREIAAELRYKISLREMGSPMPRIVKGEWVEDSWKEGTVVDEEEYVAG.

The interval 1 to 22 (MNTNRRSRSPDEEALEEDQHQY) is disordered. ATP is bound by residues Glu329, Lys331, Leu332, Arg336, Glu398, Phe438, Glu498, Lys503, Lys520, and Lys522. The active-site N6-AMP-lysine intermediate is Lys331. Residue Glu398 participates in Mg(2+) binding. Glu498 contacts Mg(2+). The span at 691 to 702 (QEQERKKMEMEN) shows a compositional bias: basic and acidic residues. The interval 691–711 (QEQERKKMEMENRKRKPATKR) is disordered. BRCT domains are found at residues 742 to 840 (ASKR…KENK) and 936 to 1049 (LRSF…EYVA).

This sequence belongs to the ATP-dependent DNA ligase family. Requires Mg(2+) as cofactor.

The protein localises to the nucleus. The enzyme catalyses ATP + (deoxyribonucleotide)n-3'-hydroxyl + 5'-phospho-(deoxyribonucleotide)m = (deoxyribonucleotide)n+m + AMP + diphosphate.. In terms of biological role, DNA ligase involved in DNA non-homologous end joining (NHEJ); required for double-strand break (DSB) repair. The polypeptide is DNA ligase 4 (mus-53) (Neurospora crassa (strain ATCC 24698 / 74-OR23-1A / CBS 708.71 / DSM 1257 / FGSC 987)).